The sequence spans 362 residues: Adenosine kinase (362 aa).

N-acetylalanine is present on Ala-2. A Nuclear localization signal motif is present at residues 8 to 16 (PKPKKLKVE). Position 35 (Asp-35) interacts with adenosine. Residue Ser-49 coordinates Mg(2+). Tyr-77 is subject to Phosphotyrosine. Positions 147 and 148 each coordinate Mg(2+). Gln-306 serves as a coordination point for adenosine. The Proton acceptor role is filled by Asp-317.

This sequence belongs to the carbohydrate kinase PfkB family. Monomer. Mg(2+) is required as a cofactor. As to expression, widely expressed. Highest level in placenta, liver, muscle and kidney.

It is found in the nucleus. The protein localises to the cytoplasm. The catalysed reaction is adenosine + ATP = AMP + ADP + H(+). Its pathway is purine metabolism; AMP biosynthesis via salvage pathway; AMP from adenosine: step 1/1. Activity is inhibited by 5-iodotubercidin and 5'-amino-5'-deoxyadenosine. Catalyzes the phosphorylation of the purine nucleoside adenosine at the 5' position in an ATP-dependent manner. Serves as a potential regulator of concentrations of extracellular adenosine and intracellular adenine nucleotides. This Homo sapiens (Human) protein is Adenosine kinase.